The sequence spans 318 residues: Receptor homology region, transmembrane domain- and RING domain-containing protein 5 (318 aa).

An N-terminal signal peptide occupies residues 1 to 20 (MNYSWITIMSLLVICKLASA). Topologically, residues 22-163 (VVLIGKNTIL…IPGFGISSWS (142 aa)) are lumenal. Cys-62 and Cys-87 are disulfide-bonded. One can recognise a PA domain in the interval 70–143 (EKRSKYRSSY…RASGEVLKGY (74 aa)). Asn-121 carries an N-linked (GlcNAc...) asparagine glycan. A helical membrane pass occupies residues 164-184 (IMGITFISLLAMSAILATCFV). Residues 185-318 (VRRHQIRQSV…DLPIVVRVYL (134 aa)) are Cytoplasmic-facing. Residues 233-275 (CAICIDDYCVGEKLRILPCKHKYHAVCIDSWLGRCRSFCPVCK) form an RING-type; atypical zinc finger.

Its subcellular location is the prevacuolar compartment membrane. It localises to the protein storage vacuole membrane. Its function is as follows. Involved in the trafficking of vacuolar proteins. May function as a sorting receptor for protein trafficking to the protein storage vacuole (PSV). The chain is Receptor homology region, transmembrane domain- and RING domain-containing protein 5 (RMR5) from Arabidopsis thaliana (Mouse-ear cress).